The primary structure comprises 296 residues: Glycine--tRNA ligase alpha subunit (296 aa).

The protein belongs to the class-II aminoacyl-tRNA synthetase family. In terms of assembly, tetramer of two alpha and two beta subunits.

Its subcellular location is the cytoplasm. The enzyme catalyses tRNA(Gly) + glycine + ATP = glycyl-tRNA(Gly) + AMP + diphosphate. In Exiguobacterium sibiricum (strain DSM 17290 / CCUG 55495 / CIP 109462 / JCM 13490 / 255-15), this protein is Glycine--tRNA ligase alpha subunit.